Here is a 64-residue protein sequence, read N- to C-terminus: Large ribosomal subunit protein bL35 (64 aa).

Belongs to the bacterial ribosomal protein bL35 family.

The polypeptide is Large ribosomal subunit protein bL35 (Aliivibrio fischeri (strain ATCC 700601 / ES114) (Vibrio fischeri)).